The following is a 450-amino-acid chain: Homogentisate 1,2-dioxygenase (450 aa).

Histidine 304 acts as the Proton acceptor in catalysis. Fe cation contacts are provided by histidine 347 and glutamate 353. Homogentisate-binding residues include tyrosine 362 and histidine 383. Histidine 383 is a Fe cation binding site.

Belongs to the homogentisate dioxygenase family. Hexamer; dimer of trimers. Requires Fe cation as cofactor.

It carries out the reaction homogentisate + O2 = 4-maleylacetoacetate + H(+). It participates in amino-acid degradation; L-phenylalanine degradation; acetoacetate and fumarate from L-phenylalanine: step 4/6. In terms of biological role, involved in the catabolism of homogentisate (2,5-dihydroxyphenylacetate or 2,5-OH-PhAc), a central intermediate in the degradation of phenylalanine and tyrosine. Catalyzes the oxidative ring cleavage of the aromatic ring of homogentisate to yield maleylacetoacetate. The chain is Homogentisate 1,2-dioxygenase from Burkholderia mallei (strain NCTC 10229).